The sequence spans 417 residues: Solute carrier family 25 member 46-A (417 aa).

A compositionally biased stretch (basic and acidic residues) spans 1–13 (MQPRRPDRFDGLE). Residues 1 to 90 (MQPRRPDRFD…AFGEENSNSA (90 aa)) are disordered. Over residues 31-41 (SSFPARSFSSS) the composition is skewed to low complexity. A Solcar 1 repeat occupies 95-186 (QLNRFAGFGI…GILSEFTHLP (92 aa)). Helical transmembrane passes span 102 to 122 (FGIG…CIVL), 162 to 182 (MGST…LSEF), 198 to 218 (IGGH…FYSA), 257 to 277 (LLPL…HYIV), 313 to 333 (FPEL…LYPL), and 382 to 402 (LGFY…AIVL). The stretch at 310–415 (EDYFPELIAN…KIIYSSVVQT (106 aa)) is one Solcar 2 repeat.

This sequence belongs to the mitochondrial carrier (TC 2.A.29) family.

Its subcellular location is the mitochondrion outer membrane. In terms of biological role, may play a role in mitochondrial dynamics by controlling mitochondrial membrane fission. The protein is Solute carrier family 25 member 46-A (slc25a46-a) of Xenopus laevis (African clawed frog).